Here is a 747-residue protein sequence, read N- to C-terminus: Threonine synthase-like 1 (747 aa).

An N6-(pyridoxal phosphate)lysine modification is found at Lys-351.

This sequence belongs to the threonine synthase family. Requires pyridoxal 5'-phosphate as cofactor.

This Mus musculus (Mouse) protein is Threonine synthase-like 1 (Thnsl1).